A 1394-amino-acid polypeptide reads, in one-letter code: Tubulin glycylase 3E (1394 aa).

Disordered stretches follow at residues 201-230 (KKKS…QRKE), 563-582 (NQKD…QNSI), 620-663 (DENE…TSNF), and 682-706 (STVK…NLKE). Low complexity predominate over residues 205–216 (NFQNKSQSQLNN). A compositionally biased stretch (basic and acidic residues) spans 217–230 (HKNEEKKPSQQRKE). Low complexity predominate over residues 568-582 (QSNQTSSVISQQNSI). Positions 627-655 (KENVLQQKKNQSNQIVTSQQQSNNYFKQE) are enriched in polar residues. Low complexity predominate over residues 682-703 (STVKNSDNNNQNQTNPQNQNTN). One can recognise a TTL domain in the interval 911-1250 (RFIFNITVIA…QNNLQEDLEI (340 aa)). ATP is bound by residues 1058 to 1061 (QKYI), K1079, and D1081. IQ domains follow at residues 1320-1349 (QYWG…QKFT) and 1348-1377 (FTFA…QQQT).

The protein localises to the cell projection. It is found in the cilium. Its subcellular location is the cytoplasm. The protein resides in the cytoskeleton. It localises to the cilium axoneme. Functionally, probable glycylase which modifies tubulin, generating side chains of glycine on the gamma-carboxyl groups of specific glutamate residues within the C-terminal tail of tubulin. This is Tubulin glycylase 3E (TTLL3E) from Tetrahymena thermophila (strain SB210).